The sequence spans 335 residues: Nucleoid-associated protein CKO_00588 (335 aa).

Belongs to the YejK family.

It localises to the cytoplasm. The protein localises to the nucleoid. This Citrobacter koseri (strain ATCC BAA-895 / CDC 4225-83 / SGSC4696) protein is Nucleoid-associated protein CKO_00588.